An 85-amino-acid polypeptide reads, in one-letter code: Depressant scorpion toxin BmKIM (85 aa).

Residues 1–21 form the signal peptide; it reads MKLFLLLVFFASMLIDGLVNA. The LCN-type CS-alpha/beta domain maps to 22–82; it reads DGYIRGSNGC…TWKSESNTCG (61 aa). 4 cysteine pairs are disulfide-bonded: Cys-31–Cys-81, Cys-35–Cys-56, Cys-42–Cys-63, and Cys-46–Cys-65. The residue at position 82 (Gly-82) is a Glycine amide.

It belongs to the long (4 C-C) scorpion toxin superfamily. Sodium channel inhibitor family. Expressed by the venom gland.

Its subcellular location is the secreted. Its function is as follows. Causes a slow progressive depressant flaccid paralysis, when injected into S.falculata blowfly larvae. Inhibits dose-dependently the total sodium (Nav) currents both in dorsal root ganglia neurons and in ventricular myocytes. Is toxic to mice by intravenous injection, but not by subcutaneous or intracerebroventricular injection. Produces antiarrhythmia in rat. Is then active on both mammals and insects. In Olivierus martensii (Manchurian scorpion), this protein is Depressant scorpion toxin BmKIM (KIM2).